Here is a 552-residue protein sequence, read N- to C-terminus: Glutamine--tRNA ligase (552 aa).

Positions proline 34–histidine 44 match the 'HIGH' region motif. ATP is bound by residues glutamate 35–asparagine 37 and histidine 41–serine 47. L-glutamine is bound by residues aspartate 67 and tyrosine 212. ATP contacts are provided by residues threonine 231, arginine 261–leucine 262, and methionine 269–lysine 271. A 'KMSKS' region motif is present at residues leucine 268–arginine 272.

It belongs to the class-I aminoacyl-tRNA synthetase family. As to quaternary structure, monomer.

Its subcellular location is the cytoplasm. It carries out the reaction tRNA(Gln) + L-glutamine + ATP = L-glutaminyl-tRNA(Gln) + AMP + diphosphate. In Hamiltonella defensa subsp. Acyrthosiphon pisum (strain 5AT), this protein is Glutamine--tRNA ligase.